A 942-amino-acid chain; its full sequence is PH and SEC7 domain-containing protein C11E3.11c (942 aa).

The span at 1–18 (MSRNASNAYLKNGNSTPS) shows a compositional bias: polar residues. Disordered regions lie at residues 1-128 (MSRN…TRLN) and 259-308 (SRNL…ETTR). The segment covering 24–40 (PSSLSQRSKTSTRSSKP) has biased composition (low complexity). Composition is skewed to polar residues over residues 50–60 (WFKNESSSRHP), 90–125 (ASMS…SSRT), 271–284 (YGNS…SSNY), and 292–305 (NRQS…STSE). The 203-residue stretch at 295–497 (SSLSIPKSTS…LSSYKSFASN (203 aa)) folds into the SEC7 domain. One can recognise a PH domain in the interval 681 to 804 (PYIKQGILKF…WIDALNYWAA (124 aa)).

The sequence is that of PH and SEC7 domain-containing protein C11E3.11c from Schizosaccharomyces pombe (strain 972 / ATCC 24843) (Fission yeast).